Here is a 129-residue protein sequence, read N- to C-terminus: Ribonuclease P protein component (129 aa).

It belongs to the RnpA family. In terms of assembly, consists of a catalytic RNA component (M1 or rnpB) and a protein subunit.

It catalyses the reaction Endonucleolytic cleavage of RNA, removing 5'-extranucleotides from tRNA precursor.. In terms of biological role, RNaseP catalyzes the removal of the 5'-leader sequence from pre-tRNA to produce the mature 5'-terminus. It can also cleave other RNA substrates such as 4.5S RNA. The protein component plays an auxiliary but essential role in vivo by binding to the 5'-leader sequence and broadening the substrate specificity of the ribozyme. This is Ribonuclease P protein component from Corynebacterium jeikeium (strain K411).